The chain runs to 338 residues: Ornithine carbamoyltransferase (338 aa).

Residues 56-59, Arg107, and 134-137 each bind carbamoyl phosphate; these read STRT and HPTQ. Residues Asn168, Asp232, and 236 to 237 each bind L-ornithine; that span reads SM. Residues 274–275 and Arg320 each bind carbamoyl phosphate; that span reads CL.

The protein belongs to the aspartate/ornithine carbamoyltransferase superfamily. OTCase family.

The protein resides in the cytoplasm. The catalysed reaction is carbamoyl phosphate + L-ornithine = L-citrulline + phosphate + H(+). It functions in the pathway amino-acid biosynthesis; L-arginine biosynthesis; L-arginine from L-ornithine and carbamoyl phosphate: step 1/3. In terms of biological role, reversibly catalyzes the transfer of the carbamoyl group from carbamoyl phosphate (CP) to the N(epsilon) atom of ornithine (ORN) to produce L-citrulline. In Buchnera aphidicola subsp. Acyrthosiphon pisum (strain APS) (Acyrthosiphon pisum symbiotic bacterium), this protein is Ornithine carbamoyltransferase (argI).